An 898-amino-acid polypeptide reads, in one-letter code: Alanine--tRNA ligase (898 aa).

Zn(2+) contacts are provided by histidine 564, histidine 568, cysteine 682, and histidine 686.

The protein belongs to the class-II aminoacyl-tRNA synthetase family. It depends on Zn(2+) as a cofactor.

Its subcellular location is the cytoplasm. It catalyses the reaction tRNA(Ala) + L-alanine + ATP = L-alanyl-tRNA(Ala) + AMP + diphosphate. Its function is as follows. Catalyzes the attachment of alanine to tRNA(Ala) in a two-step reaction: alanine is first activated by ATP to form Ala-AMP and then transferred to the acceptor end of tRNA(Ala). Also edits incorrectly charged Ser-tRNA(Ala) and Gly-tRNA(Ala) via its editing domain. This is Alanine--tRNA ligase from Beijerinckia indica subsp. indica (strain ATCC 9039 / DSM 1715 / NCIMB 8712).